A 422-amino-acid polypeptide reads, in one-letter code: Pre-B-cell leukemia transcription factor 2 (422 aa).

A disordered region spans residues methionine 1 to arginine 43. Basic and acidic residues predominate over residues proline 31–arginine 43. One can recognise a PBC domain in the interval proline 42–aspartate 236. Residues aspartate 49 to glycine 128 are PBC-A. The interval alanine 131–aspartate 236 is PBC-B. Residues alanine 237–isoleucine 299 constitute a DNA-binding region (homeobox). 2 disordered regions span residues glutamine 319–asparagine 341 and glutamine 353–asparagine 422. The segment covering valine 401–threonine 410 has biased composition (polar residues).

Belongs to the TALE/PBX homeobox family.

The protein resides in the nucleus. In terms of biological role, transcriptional activator that binds the sequence 5'-ATCAATCAA-3'. The protein is Pre-B-cell leukemia transcription factor 2 of Xenopus tropicalis (Western clawed frog).